We begin with the raw amino-acid sequence, 282 residues long: Bifunctional protein FolD (282 aa).

NADP(+) contacts are provided by residues 165–167, T192, and V233; that span reads GRG.

The protein belongs to the tetrahydrofolate dehydrogenase/cyclohydrolase family. As to quaternary structure, homodimer.

The catalysed reaction is (6R)-5,10-methylene-5,6,7,8-tetrahydrofolate + NADP(+) = (6R)-5,10-methenyltetrahydrofolate + NADPH. It carries out the reaction (6R)-5,10-methenyltetrahydrofolate + H2O = (6R)-10-formyltetrahydrofolate + H(+). Its pathway is one-carbon metabolism; tetrahydrofolate interconversion. In terms of biological role, catalyzes the oxidation of 5,10-methylenetetrahydrofolate to 5,10-methenyltetrahydrofolate and then the hydrolysis of 5,10-methenyltetrahydrofolate to 10-formyltetrahydrofolate. In Mycobacterium leprae (strain Br4923), this protein is Bifunctional protein FolD.